The chain runs to 1506 residues: DDB1- and CUL4-associated factor 1 (1506 aa).

Residues 141 to 499 are protein kinase-like; sequence QPLRTYSTGL…STLEILNLED (359 aa). 2 positions are modified to phosphoserine: S202 and S254. A disordered region spans residues 241-275; the sequence is RLDSSHKTSSRVNSATKPEEGGLKKNKSAKHGDRE. The Chromo domain maps to 561-592; the sequence is SYTHEQIVEMMEFLIEYGPAQLYWEPAEVFLK. K700 carries the post-translational modification N6-acetyllysine. Residue S827 is modified to Phosphoserine. In terms of domain architecture, LisH spans 845 to 877; that stretch reads PEKELLLLIRNHLISKGLGETATVLTREADLPM. T887 carries the phosphothreonine modification. S894 and S897 each carry phosphoserine. Disordered regions lie at residues 916–946 and 977–999; these read ATVG…GPSY and KSDH…HLPS. Residues 924–943 are compositionally biased toward pro residues; that stretch reads SAPPAHPPPRPPQGSLPLPG. Phosphoserine occurs at positions 978 and 999. WD repeat units follow at residues 1090 to 1129, 1132 to 1173, 1175 to 1212, 1214 to 1246, and 1247 to 1289; these read EDES…EEAS, CHNS…DMKH, FTED…KLLT, FNPD…WDVR, and SAQA…LLHT. A WD repeat-like region region spans residues 1090–1289; the sequence is EDESGFTCCA…DLRTFHLLHT (200 aa). Short sequence motifs (DWD box) lie at residues 1241–1248 and 1277–1284; these read VLWDVRSA and EIWDLRTF. At S1327 the chain carries Phosphoserine. Residues 1392-1506 form a disordered region; the sequence is RLAEDEDEEE…EDDIILSLNE (115 aa). 2 stretches are compositionally biased toward acidic residues: residues 1395–1482 and 1489–1500; these read EDED…EEVE and DSSDNSDLEDDI. The tract at residues 1417–1506 is interaction with NF2; sequence DDDTDDLDEL…EDDIILSLNE (90 aa).

Belongs to the VPRBP/DCAF1 family. In terms of assembly, component of the DCX (DDB1-CUL4-X-box) E3 ubiquitin-protein ligase complex, named CUL4A-RBX1-DDB1-DCAF1/VPRBP complex. Interacts with DDB1; the interaction is direct. Also forms a ternary complex with DDA1 and DDB1. Interacts with NF2 (via FERM domain). Component of the EDVP complex, a E3 ligase complex containing DYRK2, EDD/UBR5, DDB1 and DCAF1. Interacts with DYRK2; the interaction is direct. Interacts with RAG1; the interaction is direct. Interacts with LLGL1 and LLGL2. Interacts with histone H3. Interacts with ESR1 and LATS1; probably recruited by LATS1 to promote ESR1 ubiquitination and ubiquitin-mediated proteasomal degradation. Directly interacts with TET1, TET2 and TET3 (via C-terminus). Interacts with CEP78; promoting DCAF1 localization to centrosomes. As to expression, widely expressed. Expressed in oocytes and zygotes (at protein level).

The protein resides in the cytoplasm. The protein localises to the nucleus. Its subcellular location is the cytoskeleton. It is found in the microtubule organizing center. It localises to the centrosome. The catalysed reaction is L-seryl-[protein] + ATP = O-phospho-L-seryl-[protein] + ADP + H(+). It catalyses the reaction L-threonyl-[protein] + ATP = O-phospho-L-threonyl-[protein] + ADP + H(+). It participates in protein modification; protein ubiquitination. Its function is as follows. Acts both as a substrate recognition component of E3 ubiquitin-protein ligase complexes and as an atypical serine/threonine-protein kinase, playing key roles in various processes such as cell cycle, telomerase regulation and histone modification. Probable substrate-specific adapter of a DCX (DDB1-CUL4-X-box) E3 ubiquitin-protein ligase complex, named CUL4A-RBX1-DDB1-DCAF1/VPRBP complex, which mediates ubiquitination and proteasome-dependent degradation of proteins such as NF2. Involved in the turnover of methylated proteins: recognizes and binds methylated proteins via its chromo domain, leading to ubiquitination of target proteins by the RBX1-DDB1-DCAF1/VPRBP complex. The CUL4A-RBX1-DDB1-DCAF1/VPRBP complex is also involved in B-cell development: DCAF1 is recruited by RAG1 to ubiquitinate proteins, leading to limit error-prone repair during V(D)J recombination. Also part of the EDVP complex, an E3 ligase complex that mediates ubiquitination of proteins such as TERT, leading to TERT degradation and telomerase inhibition. The EDVP complex also mediates ubiquitination and degradation of CCP110. Also acts as an atypical serine/threonine-protein kinase that specifically mediates phosphorylation of 'Thr-120' of histone H2A (H2AT120ph) in a nucleosomal context, thereby repressing transcription. H2AT120ph is present in the regulatory region of many tumor suppresor genes, down-regulates their transcription and is present at high level in a number of tumors. Involved in JNK-mediated apoptosis during cell competition process via its interaction with LLGL1 and LLGL2. By acting on TET dioxygenses, essential for oocyte maintenance at the primordial follicle stage, hence essential for female fertility. This chain is DDB1- and CUL4-associated factor 1, found in Mus musculus (Mouse).